Here is a 62-residue protein sequence, read N- to C-terminus: Large ribosomal subunit protein uL29 (62 aa).

Belongs to the universal ribosomal protein uL29 family.

The polypeptide is Large ribosomal subunit protein uL29 (Geotalea daltonii (strain DSM 22248 / JCM 15807 / FRC-32) (Geobacter daltonii)).